A 78-amino-acid chain; its full sequence is Translation initiation factor IF-1, chloroplastic (78 aa).

Residues 1 to 72 enclose the S1-like domain; the sequence is MKKQKLIDME…TKGRITYRFH (72 aa).

The protein belongs to the IF-1 family. In terms of assembly, component of the 30S ribosomal translation pre-initiation complex which assembles on the 30S ribosome in the order IF-2 and IF-3, IF-1 and N-formylmethionyl-tRNA(fMet); mRNA recruitment can occur at any time during PIC assembly.

The protein localises to the plastid. Its subcellular location is the chloroplast. Its function is as follows. One of the essential components for the initiation of protein synthesis. Stabilizes the binding of IF-2 and IF-3 on the 30S subunit to which N-formylmethionyl-tRNA(fMet) subsequently binds. Helps modulate mRNA selection, yielding the 30S pre-initiation complex (PIC). Upon addition of the 50S ribosomal subunit IF-1, IF-2 and IF-3 are released leaving the mature 70S translation initiation complex. This chain is Translation initiation factor IF-1, chloroplastic, found in Huperzia lucidula (Shining clubmoss).